Consider the following 375-residue polypeptide: Tyrosine--tRNA ligase (375 aa).

Tyr37, Tyr168, Gln172, Asp175, and Gln190 together coordinate L-tyrosine. Residues 251–255 (KMSKS) carry the 'KMSKS' region motif. Lys254 contacts ATP.

It belongs to the class-I aminoacyl-tRNA synthetase family. TyrS type 4 subfamily. Homodimer.

Its subcellular location is the cytoplasm. The catalysed reaction is tRNA(Tyr) + L-tyrosine + ATP = L-tyrosyl-tRNA(Tyr) + AMP + diphosphate + H(+). Functionally, catalyzes the attachment of tyrosine to tRNA(Tyr) in a two-step reaction: tyrosine is first activated by ATP to form Tyr-AMP and then transferred to the acceptor end of tRNA(Tyr). The sequence is that of Tyrosine--tRNA ligase from Pyrococcus abyssi (strain GE5 / Orsay).